A 294-amino-acid chain; its full sequence is MSHPSTAPAHPSRLALYARLVRIDKPIGTLLLLWPTLWAMWMAAGGPPGWTLFWIFFAGTFLMRSAGCAMNDWADRDFDKHVKRTKERPLTAGLIASWEALAVAAVLALIALALILPLNALTKWLAVVAAVLAGTYPFFKRFFAIPQAYLGIAFGFGIPMAFAAIQDQVPFVAWLMLLANVFWAIAYDTAYAMVDRDDDLLLGMKTSAITFGRFDVAAIMICYAVFLGLMAWAGSLLGLGWPYYAGLVAAAGMAGYHYTLIRERDRMKCFAAFRHNNWLGACVFAGTFVAYLLK.

7 helical membrane passes run 37-57 (LWAM…WIFF), 101-121 (LAVA…LNAL), 142-162 (FFAI…PMAF), 169-189 (VPFV…AYDT), 219-239 (IMIC…LLGL), 241-261 (WPYY…YTLI), and 271-293 (AAFR…AYLL).

It belongs to the UbiA prenyltransferase family. Mg(2+) is required as a cofactor.

It is found in the cell inner membrane. It carries out the reaction all-trans-octaprenyl diphosphate + 4-hydroxybenzoate = 4-hydroxy-3-(all-trans-octaprenyl)benzoate + diphosphate. The protein operates within cofactor biosynthesis; ubiquinone biosynthesis. Catalyzes the prenylation of para-hydroxybenzoate (PHB) with an all-trans polyprenyl group. Mediates the second step in the final reaction sequence of ubiquinone-8 (UQ-8) biosynthesis, which is the condensation of the polyisoprenoid side chain with PHB, generating the first membrane-bound Q intermediate 3-octaprenyl-4-hydroxybenzoate. The sequence is that of 4-hydroxybenzoate octaprenyltransferase from Cupriavidus metallidurans (strain ATCC 43123 / DSM 2839 / NBRC 102507 / CH34) (Ralstonia metallidurans).